The primary structure comprises 310 residues: Olfactory receptor 2A14 (310 aa).

At 1–24 (MEGNKTWITDITLPRFQVGPALEI) the chain is on the extracellular side. Asparagine 4 is a glycosylation site (N-linked (GlcNAc...) asparagine). A helical transmembrane segment spans residues 25–48 (LLCGLFSAFYTLTLLGNGVIFGII). At 49-56 (CLDCKLHT) the chain is on the cytoplasmic side. The chain crosses the membrane as a helical span at residues 57-78 (PMYFFLSHLAIVDISYASNYVP). Residues 79 to 99 (KMLTNLMNQESTISFFPCIMQ) lie on the Extracellular side of the membrane. Cysteine 96 and cysteine 188 are disulfide-bonded. A helical transmembrane segment spans residues 100–119 (TFLYLAFAHVECLILVVMSY). Residues 120-138 (DRYADICHPLRYNSLMSWR) lie on the Cytoplasmic side of the membrane. The helical transmembrane segment at 139–157 (VCTVLAVASWVFSFLLALV) threads the bilayer. Residues 158–194 (PLVLILSLPFCGPHEINHFFCEILSVLKLACADTWLN) lie on the Extracellular side of the membrane. The helical transmembrane segment at 195–218 (QVVIFAACVFILVGPLCLVLVSYL) threads the bilayer. Topologically, residues 219–235 (RILAAILRIQSGEGRRK) are cytoplasmic. A helical transmembrane segment spans residues 236–258 (AFSTCSSHLCVVGLFFGSAIVTY). Topologically, residues 259–271 (MAPKSRHPEEQQK) are extracellular. A helical transmembrane segment spans residues 272–291 (VLSLFYSLFNPMLNPLIYSL). At 292–310 (RNAEVKGALRRALRKERLT) the chain is on the cytoplasmic side.

The protein belongs to the G-protein coupled receptor 1 family.

Its subcellular location is the cell membrane. Its function is as follows. Odorant receptor. The protein is Olfactory receptor 2A14 (OR2A14) of Homo sapiens (Human).